The primary structure comprises 119 residues: Large ribosomal subunit protein uL14 (119 aa).

This sequence belongs to the universal ribosomal protein uL14 family. In terms of assembly, part of the 50S ribosomal subunit. Forms a cluster with proteins L3 and L19. In the 70S ribosome, L14 and L19 interact and together make contacts with the 16S rRNA in bridges B5 and B8.

Its function is as follows. Binds to 23S rRNA. Forms part of two intersubunit bridges in the 70S ribosome. The protein is Large ribosomal subunit protein uL14 of Ehrlichia chaffeensis (strain ATCC CRL-10679 / Arkansas).